The sequence spans 471 residues: U1 small nuclear ribonucleoprotein 70 kDa (471 aa).

The disordered stretch occupies residues 48–78 (FEDPRDAPPPTRAETREERMERKRREKIERR). Residues 60 to 78 (AETREERMERKRREKIERR) are compositionally biased toward basic and acidic residues. The tract at residues 92–205 (HNDQNAQGDA…GGGLGGTRRG (114 aa)) is required for interaction with U1 RNA. The RRM domain occupies 103 to 184 (KTLFVARVNY…RRVLVDVERG (82 aa)). Residues 190-471 (WRPRRLGGGL…NGYMMEPPME (282 aa)) are disordered. Positions 195–204 (LGGGLGGTRR) are enriched in gly residues. Residues 210 to 246 (NIRHSGRDDTSRYDERDRERERDRRERSREREKEPRE) show a composition bias toward basic and acidic residues. The span at 247-261 (RRRSRSRERRRKSRS) shows a compositional bias: basic residues. Over residues 262–288 (REKEERKRTREKSKDKDKEKDKDNKDR) the composition is skewed to basic and acidic residues. Residues 289–298 (DRKRRSRSRE) show a composition bias toward basic residues. Residues 299–316 (RKRERDRDREKKEERVEA) show a composition bias toward basic and acidic residues. Over residues 317-326 (EVPEADDAPQ) the composition is skewed to acidic residues. A compositionally biased stretch (basic and acidic residues) spans 339-428 (IELKQEPEEK…RSEKREERVP (90 aa)).

In terms of assembly, component of the U1 snRNP. The U1 snRNP is composed of the U1 snRNA and the 7 core Sm proteins snrpb, snrpd1, snrpd2, snrpd3, snrpe, snrpf and snrpg that assemble in a heptameric protein ring on the Sm site of the small nuclear RNA to form the core snRNP, and at least three U1 snRNP-specific proteins snrnp70/U1-70K, snrpa/U1-A and snrpc/U1-C.

The protein resides in the nucleus speckle. It is found in the nucleus. Its subcellular location is the nucleoplasm. Functionally, component of the spliceosomal U1 snRNP, which is essential for recognition of the pre-mRNA 5' splice-site and the subsequent assembly of the spliceosome. snrnp70 binds to the loop I region of U1-snRNA. The protein is U1 small nuclear ribonucleoprotein 70 kDa (snrnp70) of Xenopus laevis (African clawed frog).